Here is a 191-residue protein sequence, read N- to C-terminus: CASP-like protein 4C3 (191 aa).

At 1 to 29 (METGDSAVKSSQDVHYYGKSTAQKHRRSN) the chain is on the cytoplasmic side. A helical membrane pass occupies residues 30–50 (GIILIFRALTFSFSLTSVIVM). Residues 51–72 (GTNRHRIDAQSRVAWYDFDPFR) are Extracellular-facing. A helical transmembrane segment spans residues 73–93 (YVLAVNAIICIYSFVEIWLAV). Over 94–116 (YTYLKDTLFLPETFQVWFDYGHD) the chain is Cytoplasmic. A helical membrane pass occupies residues 117 to 137 (QGFAYLLFSANSAGIAMAQLL). At 138–162 (QSGNSLIHGAYRCSDAGVFCTQARA) the chain is on the extracellular side. The chain crosses the membrane as a helical span at residues 163–183 (SIGLGFGAFLFLALSSLLTGL). Topologically, residues 184–191 (RVARWYFS) are cytoplasmic.

The protein belongs to the Casparian strip membrane proteins (CASP) family. As to quaternary structure, homodimer and heterodimers.

Its subcellular location is the cell membrane. This is CASP-like protein 4C3 from Physcomitrium patens (Spreading-leaved earth moss).